Consider the following 387-residue polypeptide: Succinate--CoA ligase [ADP-forming] subunit beta (387 aa).

Residues 9–244 form the ATP-grasp domain; the sequence is KQLFASYGLP…VSQEDDRENR (236 aa). ATP contacts are provided by residues K46, 53-55, E99, C102, and E107; that span reads GRG. The Mg(2+) site is built by N199 and D213. Substrate contacts are provided by residues N264 and 321–323; that span reads GIV.

The protein belongs to the succinate/malate CoA ligase beta subunit family. Heterotetramer of two alpha and two beta subunits. Requires Mg(2+) as cofactor.

The catalysed reaction is succinate + ATP + CoA = succinyl-CoA + ADP + phosphate. It carries out the reaction GTP + succinate + CoA = succinyl-CoA + GDP + phosphate. It functions in the pathway carbohydrate metabolism; tricarboxylic acid cycle; succinate from succinyl-CoA (ligase route): step 1/1. Functionally, succinyl-CoA synthetase functions in the citric acid cycle (TCA), coupling the hydrolysis of succinyl-CoA to the synthesis of either ATP or GTP and thus represents the only step of substrate-level phosphorylation in the TCA. The beta subunit provides nucleotide specificity of the enzyme and binds the substrate succinate, while the binding sites for coenzyme A and phosphate are found in the alpha subunit. This Legionella pneumophila (strain Paris) protein is Succinate--CoA ligase [ADP-forming] subunit beta.